The primary structure comprises 232 residues: LexA repressor (232 aa).

Residues 1-25 (MSDDSSDSTSGAGSGRGRDSGLTER) are disordered. The span at 16–25 (RGRDSGLTER) shows a compositional bias: basic and acidic residues. A DNA-binding region (H-T-H motif) is located at residues 46–66 (IREIGDAVGLTSTSSVAHQLR). Catalysis depends on for autocatalytic cleavage activity residues Ser156 and Lys193.

Belongs to the peptidase S24 family. In terms of assembly, homodimer.

It carries out the reaction Hydrolysis of Ala-|-Gly bond in repressor LexA.. Represses a number of genes involved in the response to DNA damage (SOS response), including recA and lexA. In the presence of single-stranded DNA, RecA interacts with LexA causing an autocatalytic cleavage which disrupts the DNA-binding part of LexA, leading to derepression of the SOS regulon and eventually DNA repair. This Mycolicibacterium vanbaalenii (strain DSM 7251 / JCM 13017 / BCRC 16820 / KCTC 9966 / NRRL B-24157 / PYR-1) (Mycobacterium vanbaalenii) protein is LexA repressor.